Reading from the N-terminus, the 394-residue chain is Elongation factor Tu (394 aa).

The 195-residue stretch at Lys-10–Glu-204 folds into the tr-type G domain. The segment at Gly-19–Thr-26 is G1. Residue Gly-19–Thr-26 participates in GTP binding. Thr-26 contacts Mg(2+). The G2 stretch occupies residues Gly-60 to Asn-64. The tract at residues Asp-81–Gly-84 is G3. GTP contacts are provided by residues Asp-81–His-85 and Asn-136–Asp-139. The G4 stretch occupies residues Asn-136–Asp-139. Residues Ser-174–Leu-176 form a G5 region.

It belongs to the TRAFAC class translation factor GTPase superfamily. Classic translation factor GTPase family. EF-Tu/EF-1A subfamily. Monomer.

Its subcellular location is the cytoplasm. The catalysed reaction is GTP + H2O = GDP + phosphate + H(+). In terms of biological role, GTP hydrolase that promotes the GTP-dependent binding of aminoacyl-tRNA to the A-site of ribosomes during protein biosynthesis. The polypeptide is Elongation factor Tu (Salmonella arizonae (strain ATCC BAA-731 / CDC346-86 / RSK2980)).